The primary structure comprises 321 residues: Ribose-phosphate pyrophosphokinase C (321 aa).

Residues Asp-132 and Asp-147 each coordinate Mg(2+). Residues 214-229 form a binding of phosphoribosylpyrophosphate region; sequence SGKVAIIIGSIADTCE.

The protein belongs to the ribose-phosphate pyrophosphokinase family. Requires Mg(2+) as cofactor.

The protein localises to the cytoplasm. The catalysed reaction is D-ribose 5-phosphate + ATP = 5-phospho-alpha-D-ribose 1-diphosphate + AMP + H(+). The protein operates within metabolic intermediate biosynthesis; 5-phospho-alpha-D-ribose 1-diphosphate biosynthesis; 5-phospho-alpha-D-ribose 1-diphosphate from D-ribose 5-phosphate (route I): step 1/1. This chain is Ribose-phosphate pyrophosphokinase C (prsC), found in Dictyostelium discoideum (Social amoeba).